The chain runs to 312 residues: tRNA pseudouridine synthase B (312 aa).

Asp37 acts as the Nucleophile in catalysis.

This sequence belongs to the pseudouridine synthase TruB family. Type 1 subfamily.

It carries out the reaction uridine(55) in tRNA = pseudouridine(55) in tRNA. Its function is as follows. Responsible for synthesis of pseudouridine from uracil-55 in the psi GC loop of transfer RNAs. The polypeptide is tRNA pseudouridine synthase B (Deinococcus geothermalis (strain DSM 11300 / CIP 105573 / AG-3a)).